Here is a 194-residue protein sequence, read N- to C-terminus: MSAITITDAAHDYLADLLSKQNTPGIGIRIFITQPGTQYAETCIAYCKPGEEKPDDTAVGLKSFTAYLDAVSVPFLEDALVDYATDRMGGQLTIKAPNAKVPMVNEDSPINERINYYLQTEINPGLASHGGQVSLVDVVDDGIAVLQFGGGCQGCGQADVTLKEGIERTLLERIPELKGVRDVTDHTQKENAYY.

[4Fe-4S] cluster contacts are provided by C152 and C155.

It belongs to the NfuA family. As to quaternary structure, homodimer. [4Fe-4S] cluster is required as a cofactor.

In terms of biological role, involved in iron-sulfur cluster biogenesis. Binds a 4Fe-4S cluster, can transfer this cluster to apoproteins, and thereby intervenes in the maturation of Fe/S proteins. Could also act as a scaffold/chaperone for damaged Fe/S proteins. This Pseudomonas putida (strain GB-1) protein is Fe/S biogenesis protein NfuA.